Here is a 117-residue protein sequence, read N- to C-terminus: Large ribosomal subunit protein bL20 (117 aa).

Belongs to the bacterial ribosomal protein bL20 family.

Functionally, binds directly to 23S ribosomal RNA and is necessary for the in vitro assembly process of the 50S ribosomal subunit. It is not involved in the protein synthesizing functions of that subunit. The chain is Large ribosomal subunit protein bL20 from Thermomicrobium roseum (strain ATCC 27502 / DSM 5159 / P-2).